The chain runs to 287 residues: Pantothenate synthetase (287 aa).

Met30 to His37 contributes to the ATP binding site. Catalysis depends on His37, which acts as the Proton donor. Gln61 serves as a coordination point for (R)-pantoate. Gln61 provides a ligand contact to beta-alanine. Gly149–Asp152 is an ATP binding site. Gln155 provides a ligand contact to (R)-pantoate. Residues Val178 and Leu186 to Arg189 contribute to the ATP site.

The protein belongs to the pantothenate synthetase family. Homodimer.

It localises to the cytoplasm. It catalyses the reaction (R)-pantoate + beta-alanine + ATP = (R)-pantothenate + AMP + diphosphate + H(+). The protein operates within cofactor biosynthesis; (R)-pantothenate biosynthesis; (R)-pantothenate from (R)-pantoate and beta-alanine: step 1/1. Catalyzes the condensation of pantoate with beta-alanine in an ATP-dependent reaction via a pantoyl-adenylate intermediate. The polypeptide is Pantothenate synthetase (Pseudomonas putida (strain W619)).